A 7311-amino-acid chain; its full sequence is MAM and LDL-receptor class A domain-containing protein 2 (7311 aa).

16 consecutive MAM domains span residues 4–171 (AYCD…SCVT), 199–361 (LDCD…FCSP), 363–530 (KQCT…VCPP), 532–695 (GDCN…NCPV), 727–887 (YDCT…QCPV), 889–1050 (MQCS…ACPL), 1052–1220 (GDCT…RCRL), 1228–1392 (FDCN…SCPS), 1394–1557 (GMCS…SCPA), 1559–1722 (GDCS…NCIQ), 1755–1918 (NDCN…KCPS), 1920–2087 (TDCT…PCPL), 2089–2254 (GDCD…RCSV), 2274–2437 (NNCT…PCPP), 2439–2601 (TVCD…PCPP), and 2603–2771 (GSCD…YCVG). The interval 2461–2481 (WKRDSGGTPSAGTGPSRDHTT) is disordered. The span at 2466 to 2475 (GGTPSAGTGP) shows a compositional bias: low complexity. P-type domains lie at 2771–2817 (GLCS…FYHP) and 2818–2862 (SACA…FHGP). Cystine bridges form between C2773/C2802, C2784/C2801, C2795/C2813, C2820/C2847, C2831/C2846, and C2841/C2858. MAM domains are found at residues 2883–3048 (WDCT…TCPP), 3050–3214 (RECD…PCPP), 3216–3384 (GSCD…FCPS), and 3429–3587 (GACT…NCTL). The LDL-receptor class A 1 domain maps to 3593-3628 (SCGQQHRCIRGSCIDRGRVCDYTDDCGDNSDEQNCY). Intrachain disulfides connect C3594-C3605, C3600-C3618, and C3612-C3627. One can recognise an MAM 21 domain in the interval 3632–3794 (YRCSFEKSLC…DLSMTSSCQS (163 aa)). 2 consecutive LDL-receptor class A domains span residues 3814–3850 (PCPRFQFKCSNGLCIDTWNVCNYRDDCGDGSDEVNCG) and 4016–4054 (SCISGEYRCTRGSCVLPSQLCDFSDDCGDMSDENPSTCA). Cystine bridges form between C3815/C3827, C3822/C3840, and C3834/C3849. In terms of domain architecture, MAM 22 spans 3850-4011 (GSCSFEPGLC…DDVTFQGCAL (162 aa)). Intrachain disulfides connect C4017–C4029, C4024–C4042, and C4036–C4053. In terms of domain architecture, MAM 23 spans 4058–4221 (ERCNFEQDLC…DVSFTPNCRP (164 aa)). The LDL-receptor class A 4 domain occupies 4239-4276 (GCQPGKFKCANGGNCISVSKVCNFYSDCSGGSDEMNCP). 3 cysteine pairs are disulfide-bonded: C4240–C4253, C4247–C4266, and C4260–C4275. Residues 4277–4438 (ATCNFQNSFC…DDVSFEHCAE (162 aa)) form the MAM 24 domain. Residues 4444–4483 (TCSGLSVFRCQSGHCIAMSGKCDFEPDCCDGSEETNIVCA) enclose the LDL-receptor class A 5 domain. Disulfide bonds link C4445–C4458, C4453–C4471, and C4465–C4482. The 161-residue stretch at 4486-4646 (NRCNFEAGLC…DISFTPDCVV (161 aa)) folds into the MAM 25 domain. LDL-receptor class A domains follow at residues 4660 to 4699 (PTQPSCFNCRDGSACVNISKTCDFHNDCTDKSDEDADLCG) and 4859 to 4899 (YCSG…QSCS). Disulfide bonds link C4668–C4687, C4681–C4698, C4860–C4876, C4871–C4889, and C4883–C4898. Residues 4700 to 4862 (WPCDFQRGTC…NNYTLTYCSG (163 aa)) enclose the MAM 26 domain. Residues 4903-5063 (SRCTFENGLC…SIAMKPSCQQ (161 aa)) form the MAM 27 domain. The 38-residue stretch at 5085–5122 (NCVLPQVPCVSDGKCVSPSQVCDFNLDCADASDERSCP) folds into the LDL-receptor class A 8 domain. Cystine bridges form between C5086–C5099, C5093–C5112, and C5106–C5121. The 159-residue stretch at 5123–5281 (HMCTFESDQC…DDIKFVDCAL (159 aa)) folds into the MAM 28 domain. The 36-residue stretch at 5287–5322 (SCPSQFTCARNSCVSNDYVCDFNDDCGDGSDETLCG) folds into the LDL-receptor class A 9 domain. 3 disulfides stabilise this stretch: C5288-C5299, C5294-C5312, and C5306-C5321. The region spanning 5326–5489 (TRCDFSRGSC…DVSFTTGCKQ (164 aa)) is the MAM 29 domain. The LDL-receptor class A 10 domain occupies 5513–5552 (QCTTAEFNCFNQGSGACIPSTQVCNFQPNCNDGVDEQNCA). Disulfide bonds link C5514–C5529, C5521–C5542, and C5536–C5551. The region spanning 5554–5719 (TKCSFDGGDF…DDIEFLNCVP (166 aa)) is the MAM 30 domain. One can recognise an LDL-receptor class A 11 domain in the interval 5725-5763 (KCTADEFQCARGGCIPKTSVCDFKADCMVGDVSDESSCS). Cystine bridges form between C5726–C5738, C5733–C5751, and C5745–C5762. An MAM 31 domain is found at 5768–5935 (GQCDFEHGLC…LTPGCQICTD (168 aa)). The LDL-receptor class A 12 domain maps to 5957-5993 (PCSLQQYVCKNLRCVDKAQICNFKDDCGDNSDELPCG). Cystine bridges form between C5958/C5970, C5965/C5983, and C5977/C5992. The 163-residue stretch at 5994–6156 (SNCTFEGDCY…DISFTDNCFV (163 aa)) folds into the MAM 32 domain. A disordered region spans residues 6014 to 6034 (NFHWRRRNGKTPSVGTGPTND). The segment covering 6023–6034 (KTPSVGTGPTND) has biased composition (polar residues). Residues 6161 to 6200 (TCTPNEVKCRTSGHCVAEQRVCDHVKDCNDGTDEDALICS) enclose the LDL-receptor class A 13 domain. 3 disulfides stabilise this stretch: C6162–C6175, C6169–C6188, and C6182–C6199. Positions 6204 to 6365 (ASCDFDVNWC…DISFSAGCYK (162 aa)) constitute an MAM 33 domain. Residues 6377–6414 (RCSKVQFYCKADDLCINIHWKCDGEKDCTDGADEMLCP) enclose the LDL-receptor class A 14 domain. Cystine bridges form between C6378/C6391, C6385/C6404, and C6398/C6413. MAM domains are found at residues 6430-6590 (ANCN…NCAK), 6606-6779 (LDED…NCDF), 6808-6965 (GDCT…QCQF), and 7173-7311 (GSCN…YNNL).

As to expression, component of the acid-insoluble and acid-soluble organic matrix of the aragonitic skeleton (at protein level).

It localises to the secreted. In Acropora millepora (Staghorn coral), this protein is MAM and LDL-receptor class A domain-containing protein 2.